The chain runs to 487 residues: 3-octaprenyl-4-hydroxybenzoate carboxy-lyase (487 aa).

Asparagine 172 serves as a coordination point for Mn(2+). Prenylated FMN-binding positions include 175 to 177 (IYR), 189 to 191 (RWL), and 194 to 195 (RG). Residue glutamate 238 coordinates Mn(2+). The active-site Proton donor is aspartate 287.

It belongs to the UbiD family. Homohexamer. The cofactor is prenylated FMN. Mn(2+) is required as a cofactor.

Its subcellular location is the cell membrane. The enzyme catalyses a 4-hydroxy-3-(all-trans-polyprenyl)benzoate + H(+) = a 2-(all-trans-polyprenyl)phenol + CO2. It functions in the pathway cofactor biosynthesis; ubiquinone biosynthesis. Catalyzes the decarboxylation of 3-octaprenyl-4-hydroxy benzoate to 2-octaprenylphenol, an intermediate step in ubiquinone biosynthesis. In Actinobacillus pleuropneumoniae serotype 5b (strain L20), this protein is 3-octaprenyl-4-hydroxybenzoate carboxy-lyase.